A 224-amino-acid polypeptide reads, in one-letter code: Large ribosomal subunit protein uL1c (224 aa).

It belongs to the universal ribosomal protein uL1 family. Part of the 50S ribosomal subunit.

It localises to the plastid. It is found in the chloroplast. In terms of biological role, binds directly to 23S rRNA. Might be involved in E site tRNA release (Potential). This is Large ribosomal subunit protein uL1c (rpl1) from Cyanidioschyzon merolae (strain NIES-3377 / 10D) (Unicellular red alga).